We begin with the raw amino-acid sequence, 60 residues long: Large ribosomal subunit protein bL32 (60 aa).

Positions 1–23 (MAVPRNRHSNARKNIRRSHHAKQ) are disordered.

Belongs to the bacterial ribosomal protein bL32 family.

This is Large ribosomal subunit protein bL32 from Chlamydia abortus (strain DSM 27085 / S26/3) (Chlamydophila abortus).